A 125-amino-acid chain; its full sequence is MTQRLRIALIAHDQKKDDMVAFARAHEQALSRYDIVATGTTGGLIQDACPSLNIHRVKSGPLGGDQQIGAMIAEGTVEVLIFFIDPLSPLPHDVDVKALTRLGSVYDIPMALNRATAEKLVRALD.

In terms of domain architecture, MGS-like spans 1 to 125 (MTQRLRIALI…TAEKLVRALD (125 aa)). Substrate contacts are provided by residues histidine 12, lysine 16, 38–41 (TGTT), and 59–60 (SG). Aspartate 65 functions as the Proton donor/acceptor in the catalytic mechanism. Histidine 92 provides a ligand contact to substrate.

This sequence belongs to the methylglyoxal synthase family.

It catalyses the reaction dihydroxyacetone phosphate = methylglyoxal + phosphate. In terms of biological role, catalyzes the formation of methylglyoxal from dihydroxyacetone phosphate. In Brucella abortus (strain S19), this protein is Methylglyoxal synthase.